Here is a 777-residue protein sequence, read N- to C-terminus: Rho guanine nucleotide exchange factor 38 (777 aa).

Thr34 carries the post-translational modification Phosphothreonine. Residues 35-72 are disordered; that stretch reads DTVVESSVSGDHSGTLRRSQSDRTEYNQKLQEKMTPQG. Residues 37-52 show a composition bias toward polar residues; sequence VVESSVSGDHSGTLRR. Positions 53–66 are enriched in basic and acidic residues; it reads SQSDRTEYNQKLQE. The 192-residue stretch at 94 to 285 folds into the DH domain; the sequence is KREKIIKELI…KDINVNINEL (192 aa). Residues 327-536 enclose the BAR domain; sequence LKILTRGESQ…QNQVLEEIQN (210 aa). Positions 582 to 645 constitute an SH3 1 domain; the sequence is SAEELYQAKR…YSSFLKPYNP (64 aa). The interval 673-694 is disordered; sequence PASDSVTGTSESSIGDSSSSLS. The span at 679-694 shows a compositional bias: low complexity; it reads TGTSESSIGDSSSSLS. The region spanning 713-776 is the SH3 2 domain; the sequence is VDEQIFYAVH…PANYLGKMTY (64 aa).

Its function is as follows. May act as a guanine-nucleotide releasing factor. This chain is Rho guanine nucleotide exchange factor 38 (ARHGEF38), found in Homo sapiens (Human).